Consider the following 250-residue polypeptide: Cyclin-Q (250 aa).

N-acetylmethionine is present on Met1. The segment covering 1-10 (MEAVRPDSCE) has biased composition (basic and acidic residues). Residues 1–22 (MEAVRPDSCERGTAAARAEERP) are disordered.

This sequence belongs to the cyclin family. Cyclin-like FAM58 subfamily. As to quaternary structure, associates with CDK10 to promote its kinase activity.

In terms of biological role, activating cyclin for the cyclin-associated kinase CDK10. This chain is Cyclin-Q (Ccnq), found in Rattus norvegicus (Rat).